A 323-amino-acid chain; its full sequence is Lipoyl synthase (323 aa).

[4Fe-4S] cluster contacts are provided by C61, C66, C72, C87, C91, C94, and S300. The Radical SAM core domain occupies 73–289 (WDKKHATFMI…ETVAYSKGFL (217 aa)).

This sequence belongs to the radical SAM superfamily. Lipoyl synthase family. The cofactor is [4Fe-4S] cluster.

The protein resides in the cytoplasm. It catalyses the reaction [[Fe-S] cluster scaffold protein carrying a second [4Fe-4S](2+) cluster] + N(6)-octanoyl-L-lysyl-[protein] + 2 oxidized [2Fe-2S]-[ferredoxin] + 2 S-adenosyl-L-methionine + 4 H(+) = [[Fe-S] cluster scaffold protein] + N(6)-[(R)-dihydrolipoyl]-L-lysyl-[protein] + 4 Fe(3+) + 2 hydrogen sulfide + 2 5'-deoxyadenosine + 2 L-methionine + 2 reduced [2Fe-2S]-[ferredoxin]. The protein operates within protein modification; protein lipoylation via endogenous pathway; protein N(6)-(lipoyl)lysine from octanoyl-[acyl-carrier-protein]: step 2/2. Catalyzes the radical-mediated insertion of two sulfur atoms into the C-6 and C-8 positions of the octanoyl moiety bound to the lipoyl domains of lipoate-dependent enzymes, thereby converting the octanoylated domains into lipoylated derivatives. The protein is Lipoyl synthase of Rhizobium etli (strain CIAT 652).